We begin with the raw amino-acid sequence, 286 residues long: Putative inorganic pyrophosphatase C3A12.02 (286 aa).

Arg85 contacts diphosphate. Asp122, Asp127, and Asp159 together coordinate Mg(2+).

Belongs to the PPase family. It depends on Mg(2+) as a cofactor.

It is found in the cytoplasm. It catalyses the reaction diphosphate + H2O = 2 phosphate + H(+). The sequence is that of Putative inorganic pyrophosphatase C3A12.02 from Schizosaccharomyces pombe (strain 972 / ATCC 24843) (Fission yeast).